A 217-amino-acid polypeptide reads, in one-letter code: Protein MODIFYING WALL LIGNIN-2 (217 aa).

Residues 1-23 (MHNLFLYSVVFSLGLVSFITCFA) form the signal peptide. The Cytoplasmic portion of the chain corresponds to 24–51 (AEFKRTQKEDIRWDTERNCYVPGSHAFG). Residues 52–72 (LGSAAVLCFCLAQIVGNIVVF) form a helical membrane-spanning segment. Over 73–94 (RNHRTRTKREDGYKITDLTLPT) the chain is Extracellular. The chain crosses the membrane as a helical span at residues 95–115 (VLLLLSWSNFVVVVLILSTAI). Topologically, residues 116-137 (SMSRAQAYGEGWLDEDCYLVKD) are cytoplasmic. A helical membrane pass occupies residues 138–158 (GVFAASGCLAILGLGALTISA). At 159 to 217 (TRIKVKKQQQLVQVVIKDQNQDQRRSMEEEQKHDEHQTNKSESVIHLVEEVSSTNISRI) the chain is on the extracellular side. N-linked (GlcNAc...) asparagine glycans are attached at residues N197 and N213.

It belongs to the DESIGUAL family.

It localises to the cell membrane. Its function is as follows. Together with MWL1, contributes to secondary cell wall biology, specifically lignin biosynthesis. The sequence is that of Protein MODIFYING WALL LIGNIN-2 from Arabidopsis thaliana (Mouse-ear cress).